Here is a 320-residue protein sequence, read N- to C-terminus: tRNA(Ile)-lysidine synthase (320 aa).

33 to 38 (SGGPDS) serves as a coordination point for ATP.

It belongs to the tRNA(Ile)-lysidine synthase family.

Its subcellular location is the cytoplasm. It catalyses the reaction cytidine(34) in tRNA(Ile2) + L-lysine + ATP = lysidine(34) in tRNA(Ile2) + AMP + diphosphate + H(+). In terms of biological role, ligates lysine onto the cytidine present at position 34 of the AUA codon-specific tRNA(Ile) that contains the anticodon CAU, in an ATP-dependent manner. Cytidine is converted to lysidine, thus changing the amino acid specificity of the tRNA from methionine to isoleucine. This chain is tRNA(Ile)-lysidine synthase, found in Mycolicibacterium paratuberculosis (strain ATCC BAA-968 / K-10) (Mycobacterium paratuberculosis).